A 383-amino-acid chain; its full sequence is S-adenosylmethionine synthase (383 aa).

ATP is bound at residue His15. Asp17 provides a ligand contact to Mg(2+). Glu43 serves as a coordination point for K(+). Residues Glu56 and Gln99 each contribute to the L-methionine site. Residues 99–109 are flexible loop; that stretch reads QSPDINQGVDR. Residues 164–166, 230–231, Asp239, 245–246, Ala262, and Lys266 each bind ATP; these read DAK, RF, and RK. Asp239 lines the L-methionine pocket. Lys270 is an L-methionine binding site.

The protein belongs to the AdoMet synthase family. Homotetramer; dimer of dimers. The cofactor is Mg(2+). Requires K(+) as cofactor.

It is found in the cytoplasm. The catalysed reaction is L-methionine + ATP + H2O = S-adenosyl-L-methionine + phosphate + diphosphate. It functions in the pathway amino-acid biosynthesis; S-adenosyl-L-methionine biosynthesis; S-adenosyl-L-methionine from L-methionine: step 1/1. In terms of biological role, catalyzes the formation of S-adenosylmethionine (AdoMet) from methionine and ATP. The overall synthetic reaction is composed of two sequential steps, AdoMet formation and the subsequent tripolyphosphate hydrolysis which occurs prior to release of AdoMet from the enzyme. This Shewanella amazonensis (strain ATCC BAA-1098 / SB2B) protein is S-adenosylmethionine synthase.